A 190-amino-acid chain; its full sequence is Elongation factor P-like protein (190 aa).

Belongs to the elongation factor P family.

The sequence is that of Elongation factor P-like protein from Pectobacterium carotovorum subsp. carotovorum (strain PC1).